Reading from the N-terminus, the 149-residue chain is Calmodulin-2 (149 aa).

Ala-2 is modified (N-acetylalanine). EF-hand domains lie at 8–43 (EQIA…LGQN), 44–79 (PTEA…KMKD), 81–116 (DSEE…LGEK), and 117–149 (LTDE…MMAK). Residues Asp-21, Asp-23, Asp-25, Cys-27, Glu-32, Asp-57, Asp-59, Asn-61, Thr-63, Glu-68, Asp-94, Asp-96, Asn-98, and Glu-105 each contribute to the Ca(2+) site. Lys-116 bears the N6,N6,N6-trimethyllysine mark. Ca(2+) contacts are provided by Asp-130, Asp-132, Asp-134, Gln-136, and Glu-141.

Belongs to the calmodulin family.

Calmodulin mediates the control of a large number of enzymes, ion channels and other proteins by Ca(2+). Among the enzymes to be stimulated by the calmodulin-Ca(2+) complex are a number of protein kinases and phosphatases. In Oryza sativa subsp. indica (Rice), this protein is Calmodulin-2 (CAM2).